A 427-amino-acid chain; its full sequence is Adenylosuccinate synthetase (427 aa).

Residues G12–K18 and G40–T42 contribute to the GTP site. The Proton acceptor role is filled by D13. Positions 13 and 40 each coordinate Mg(2+). IMP contacts are provided by residues D13–K16, N38–H41, T126, R140, Q221, T236, and R299. H41 (proton donor) is an active-site residue. S295–R301 is a binding site for substrate. GTP-binding positions include R301, K327 to D329, and S409 to G411.

The protein belongs to the adenylosuccinate synthetase family. As to quaternary structure, homodimer. Requires Mg(2+) as cofactor.

The protein localises to the cytoplasm. It carries out the reaction IMP + L-aspartate + GTP = N(6)-(1,2-dicarboxyethyl)-AMP + GDP + phosphate + 2 H(+). The protein operates within purine metabolism; AMP biosynthesis via de novo pathway; AMP from IMP: step 1/2. Its function is as follows. Plays an important role in the de novo pathway of purine nucleotide biosynthesis. Catalyzes the first committed step in the biosynthesis of AMP from IMP. This chain is Adenylosuccinate synthetase, found in Borrelia turicatae (strain 91E135).